The sequence spans 444 residues: tRNA modification GTPase MnmE (444 aa).

The (6S)-5-formyl-5,6,7,8-tetrahydrofolate site is built by R22, E79, and R118. Positions 214–368 (GMQVVLAGPP…LRDHLKSVMG (155 aa)) constitute a TrmE-type G domain. N224 provides a ligand contact to K(+). GTP is bound by residues 224–229 (NAGKSS), 243–249 (TEVPGTT), and 268–271 (DTAG). S228 serves as a coordination point for Mg(2+). 3 residues coordinate K(+): T243, V245, and T248. T249 is a binding site for Mg(2+). K444 lines the (6S)-5-formyl-5,6,7,8-tetrahydrofolate pocket.

Belongs to the TRAFAC class TrmE-Era-EngA-EngB-Septin-like GTPase superfamily. TrmE GTPase family. As to quaternary structure, homodimer. Heterotetramer of two MnmE and two MnmG subunits. The cofactor is K(+).

It is found in the cytoplasm. In terms of biological role, exhibits a very high intrinsic GTPase hydrolysis rate. Involved in the addition of a carboxymethylaminomethyl (cmnm) group at the wobble position (U34) of certain tRNAs, forming tRNA-cmnm(5)s(2)U34. The protein is tRNA modification GTPase MnmE of Alkalilimnicola ehrlichii (strain ATCC BAA-1101 / DSM 17681 / MLHE-1).